The primary structure comprises 384 residues: Anhydro-N-acetylmuramic acid kinase (384 aa).

ATP is bound at residue 9 to 16 (GTSADGVD).

Belongs to the anhydro-N-acetylmuramic acid kinase family.

The catalysed reaction is 1,6-anhydro-N-acetyl-beta-muramate + ATP + H2O = N-acetyl-D-muramate 6-phosphate + ADP + H(+). The protein operates within amino-sugar metabolism; 1,6-anhydro-N-acetylmuramate degradation. It functions in the pathway cell wall biogenesis; peptidoglycan recycling. Functionally, catalyzes the specific phosphorylation of 1,6-anhydro-N-acetylmuramic acid (anhMurNAc) with the simultaneous cleavage of the 1,6-anhydro ring, generating MurNAc-6-P. Is required for the utilization of anhMurNAc either imported from the medium or derived from its own cell wall murein, and thus plays a role in cell wall recycling. The protein is Anhydro-N-acetylmuramic acid kinase of Synechococcus sp. (strain CC9311).